Reading from the N-terminus, the 101-residue chain is Small ribosomal subunit protein bS18c (101 aa).

Belongs to the bacterial ribosomal protein bS18 family. As to quaternary structure, part of the 30S ribosomal subunit.

The protein resides in the plastid. The protein localises to the chloroplast. The chain is Small ribosomal subunit protein bS18c from Citrus sinensis (Sweet orange).